The sequence spans 158 residues: MEAERPQEDGEQSLPQDDQGWPPVNSTARPWRSAPPSPPPPGTRHTALGPRSGSLLSLQTELLLDLVAEAQSRRLEEQRAAFHTPKVPPSLAPTPPRLLEDKEQLYSTILSHQCQRIEAQRSDPPLPPGGQELLELLLRVQGGGRMEDQRSRPPTHTC.

Residues 1–53 (MEAERPQEDGEQSLPQDDQGWPPVNSTARPWRSAPPSPPPPGTRHTALGPRSG) are disordered. Residues S33 and S37 each carry the phosphoserine modification. Over residues 33-42 (SAPPSPPPPG) the composition is skewed to pro residues. Over residues 43-53 (TRHTALGPRSG) the composition is skewed to low complexity. Phosphoserine occurs at positions 54 and 57. The residue at position 60 (T60) is a Phosphothreonine. Residues 60 to 82 (TELLLDLVAEAQSRRLEEQRAAF) form the GoLoco 1 domain. Positions 78–97 (QRAAFHTPKVPPSLAPTPPR) are disordered. Residues 86 to 96 (KVPPSLAPTPP) are compositionally biased toward pro residues. GoLoco domains follow at residues 102–124 (KEQL…RSDP) and 130–153 (GQEL…RSRP).

Its subcellular location is the cytoplasm. Interacts with subunit of G(i) alpha proteins and regulates the activation of G(i) alpha proteins. This Rattus norvegicus (Rat) protein is G-protein-signaling modulator 3 (Gpsm3).